The chain runs to 343 residues: Uroporphyrinogen decarboxylase (343 aa).

Residues 23–27, Asp73, Tyr150, Ser205, and His322 each bind substrate; that span reads RQAGR.

Belongs to the uroporphyrinogen decarboxylase family. In terms of assembly, homodimer.

The protein resides in the cytoplasm. The enzyme catalyses uroporphyrinogen III + 4 H(+) = coproporphyrinogen III + 4 CO2. Its pathway is porphyrin-containing compound metabolism; protoporphyrin-IX biosynthesis; coproporphyrinogen-III from 5-aminolevulinate: step 4/4. Catalyzes the decarboxylation of four acetate groups of uroporphyrinogen-III to yield coproporphyrinogen-III. In Cereibacter sphaeroides (strain ATCC 17025 / ATH 2.4.3) (Rhodobacter sphaeroides), this protein is Uroporphyrinogen decarboxylase.